A 244-amino-acid polypeptide reads, in one-letter code: 14-3-3 protein beta/alpha-A (244 aa).

Position 1 is an N-acetylmethionine (Met-1).

This sequence belongs to the 14-3-3 family. In terms of assembly, homodimer, and heterodimer with other family members.

It localises to the cytoplasm. Adapter protein implicated in the regulation of a large spectrum of both general and specialized signaling pathways. Binds to a large number of partners, usually by recognition of a phosphoserine or phosphothreonine motif. Binding generally results in the modulation of the activity of the binding partner. This Xenopus laevis (African clawed frog) protein is 14-3-3 protein beta/alpha-A (ywhab-a).